The following is a 335-amino-acid chain: Methylthioribose-1-phosphate isomerase (335 aa).

Residues 43–45 (RGA), Arg-86, and Gln-193 contribute to the substrate site. The active-site Proton donor is Asp-234. 244–245 (NK) is a substrate binding site.

Belongs to the eIF-2B alpha/beta/delta subunits family. MtnA subfamily.

The enzyme catalyses 5-(methylsulfanyl)-alpha-D-ribose 1-phosphate = 5-(methylsulfanyl)-D-ribulose 1-phosphate. It participates in amino-acid biosynthesis; L-methionine biosynthesis via salvage pathway; L-methionine from S-methyl-5-thio-alpha-D-ribose 1-phosphate: step 1/6. Catalyzes the interconversion of methylthioribose-1-phosphate (MTR-1-P) into methylthioribulose-1-phosphate (MTRu-1-P). In Parabacteroides distasonis (strain ATCC 8503 / DSM 20701 / CIP 104284 / JCM 5825 / NCTC 11152), this protein is Methylthioribose-1-phosphate isomerase.